Consider the following 295-residue polypeptide: Ribosomal RNA small subunit methyltransferase A (295 aa).

S-adenosyl-L-methionine is bound by residues Asn31, Leu33, Gly58, Glu79, Asp104, and Asn129.

Belongs to the class I-like SAM-binding methyltransferase superfamily. rRNA adenine N(6)-methyltransferase family. RsmA subfamily.

It is found in the cytoplasm. It carries out the reaction adenosine(1518)/adenosine(1519) in 16S rRNA + 4 S-adenosyl-L-methionine = N(6)-dimethyladenosine(1518)/N(6)-dimethyladenosine(1519) in 16S rRNA + 4 S-adenosyl-L-homocysteine + 4 H(+). Functionally, specifically dimethylates two adjacent adenosines (A1518 and A1519) in the loop of a conserved hairpin near the 3'-end of 16S rRNA in the 30S particle. May play a critical role in biogenesis of 30S subunits. The polypeptide is Ribosomal RNA small subunit methyltransferase A (Leuconostoc citreum (strain KM20)).